We begin with the raw amino-acid sequence, 743 residues long: Phosphoribosylformylglycinamidine synthase subunit PurL (743 aa).

Histidine 53 is an active-site residue. ATP is bound by residues tyrosine 56 and lysine 95. Glutamate 97 contacts Mg(2+). Residues 98 to 101 (SHNH) and arginine 120 contribute to the substrate site. The active-site Proton acceptor is histidine 99. A Mg(2+)-binding site is contributed by aspartate 121. Glutamine 245 is a binding site for substrate. Residue aspartate 275 coordinates Mg(2+). 319 to 321 (ESQ) contacts substrate. ATP-binding residues include aspartate 502 and glycine 539. Asparagine 540 serves as a coordination point for Mg(2+). Substrate is bound at residue serine 542.

This sequence belongs to the FGAMS family. As to quaternary structure, monomer. Part of the FGAM synthase complex composed of 1 PurL, 1 PurQ and 2 PurS subunits.

The protein resides in the cytoplasm. It catalyses the reaction N(2)-formyl-N(1)-(5-phospho-beta-D-ribosyl)glycinamide + L-glutamine + ATP + H2O = 2-formamido-N(1)-(5-O-phospho-beta-D-ribosyl)acetamidine + L-glutamate + ADP + phosphate + H(+). It participates in purine metabolism; IMP biosynthesis via de novo pathway; 5-amino-1-(5-phospho-D-ribosyl)imidazole from N(2)-formyl-N(1)-(5-phospho-D-ribosyl)glycinamide: step 1/2. Part of the phosphoribosylformylglycinamidine synthase complex involved in the purines biosynthetic pathway. Catalyzes the ATP-dependent conversion of formylglycinamide ribonucleotide (FGAR) and glutamine to yield formylglycinamidine ribonucleotide (FGAM) and glutamate. The FGAM synthase complex is composed of three subunits. PurQ produces an ammonia molecule by converting glutamine to glutamate. PurL transfers the ammonia molecule to FGAR to form FGAM in an ATP-dependent manner. PurS interacts with PurQ and PurL and is thought to assist in the transfer of the ammonia molecule from PurQ to PurL. The polypeptide is Phosphoribosylformylglycinamidine synthase subunit PurL (Lactobacillus helveticus (strain DPC 4571)).